We begin with the raw amino-acid sequence, 165 residues long: Large ribosomal subunit protein uL10 (165 aa).

It belongs to the universal ribosomal protein uL10 family. In terms of assembly, part of the ribosomal stalk of the 50S ribosomal subunit. The N-terminus interacts with L11 and the large rRNA to form the base of the stalk. The C-terminus forms an elongated spine to which L12 dimers bind in a sequential fashion forming a multimeric L10(L12)X complex.

Its function is as follows. Forms part of the ribosomal stalk, playing a central role in the interaction of the ribosome with GTP-bound translation factors. The chain is Large ribosomal subunit protein uL10 from Dechloromonas aromatica (strain RCB).